The primary structure comprises 426 residues: Enolase (426 aa).

Glutamine 162 contacts (2R)-2-phosphoglycerate. Glutamate 204 acts as the Proton donor in catalysis. Residues aspartate 241, glutamate 284, and aspartate 311 each contribute to the Mg(2+) site. (2R)-2-phosphoglycerate contacts are provided by lysine 336, arginine 365, serine 366, and lysine 387. Catalysis depends on lysine 336, which acts as the Proton acceptor.

It belongs to the enolase family. Component of the RNA degradosome, a multiprotein complex involved in RNA processing and mRNA degradation. Requires Mg(2+) as cofactor.

The protein localises to the cytoplasm. Its subcellular location is the secreted. The protein resides in the cell surface. The catalysed reaction is (2R)-2-phosphoglycerate = phosphoenolpyruvate + H2O. The protein operates within carbohydrate degradation; glycolysis; pyruvate from D-glyceraldehyde 3-phosphate: step 4/5. In terms of biological role, catalyzes the reversible conversion of 2-phosphoglycerate (2-PG) into phosphoenolpyruvate (PEP). It is essential for the degradation of carbohydrates via glycolysis. The polypeptide is Enolase (Thioalkalivibrio sulfidiphilus (strain HL-EbGR7)).